The chain runs to 362 residues: 3-dehydroquinate synthase (362 aa).

NAD(+) is bound by residues 74 to 79 (DGEEHK), 108 to 112 (GVTGD), 132 to 133 (TT), K145, and K154. E187, H250, and H267 together coordinate Zn(2+).

Belongs to the sugar phosphate cyclases superfamily. Dehydroquinate synthase family. Co(2+) serves as cofactor. Requires Zn(2+) as cofactor. It depends on NAD(+) as a cofactor.

Its subcellular location is the cytoplasm. It catalyses the reaction 7-phospho-2-dehydro-3-deoxy-D-arabino-heptonate = 3-dehydroquinate + phosphate. The protein operates within metabolic intermediate biosynthesis; chorismate biosynthesis; chorismate from D-erythrose 4-phosphate and phosphoenolpyruvate: step 2/7. Functionally, catalyzes the conversion of 3-deoxy-D-arabino-heptulosonate 7-phosphate (DAHP) to dehydroquinate (DHQ). The sequence is that of 3-dehydroquinate synthase from Syntrophotalea carbinolica (strain DSM 2380 / NBRC 103641 / GraBd1) (Pelobacter carbinolicus).